We begin with the raw amino-acid sequence, 205 residues long: Holliday junction branch migration complex subunit RuvA (205 aa).

A domain I region spans residues 1–64; that stretch reads MIGRLRGVLV…EDAQLLYGFI (64 aa). The domain II stretch occupies residues 65 to 143; sequence TKQERALFRL…SLMEASAGSE (79 aa). Residues 144 to 156 are flexible linker; sequence REFVLQSNYSPTP. Residues 157-205 form a domain III region; it reads TVNSAEEDAISALISLGYKPPQASKSVSAAYKEGMDSETLIKAALKSML.

Belongs to the RuvA family. As to quaternary structure, homotetramer. Forms an RuvA(8)-RuvB(12)-Holliday junction (HJ) complex. HJ DNA is sandwiched between 2 RuvA tetramers; dsDNA enters through RuvA and exits via RuvB. An RuvB hexamer assembles on each DNA strand where it exits the tetramer. Each RuvB hexamer is contacted by two RuvA subunits (via domain III) on 2 adjacent RuvB subunits; this complex drives branch migration. In the full resolvosome a probable DNA-RuvA(4)-RuvB(12)-RuvC(2) complex forms which resolves the HJ.

The protein localises to the cytoplasm. Its function is as follows. The RuvA-RuvB-RuvC complex processes Holliday junction (HJ) DNA during genetic recombination and DNA repair, while the RuvA-RuvB complex plays an important role in the rescue of blocked DNA replication forks via replication fork reversal (RFR). RuvA specifically binds to HJ cruciform DNA, conferring on it an open structure. The RuvB hexamer acts as an ATP-dependent pump, pulling dsDNA into and through the RuvAB complex. HJ branch migration allows RuvC to scan DNA until it finds its consensus sequence, where it cleaves and resolves the cruciform DNA. The polypeptide is Holliday junction branch migration complex subunit RuvA (Shewanella sp. (strain W3-18-1)).